We begin with the raw amino-acid sequence, 96 residues long: Large ribosomal subunit protein uL23 (96 aa).

It belongs to the universal ribosomal protein uL23 family. In terms of assembly, part of the 50S ribosomal subunit. Contacts protein L29, and trigger factor when it is bound to the ribosome.

Its function is as follows. One of the early assembly proteins it binds 23S rRNA. One of the proteins that surrounds the polypeptide exit tunnel on the outside of the ribosome. Forms the main docking site for trigger factor binding to the ribosome. The chain is Large ribosomal subunit protein uL23 from Clostridioides difficile (strain 630) (Peptoclostridium difficile).